A 616-amino-acid chain; its full sequence is Spastin (616 aa).

A disordered region spans residues 1-43 (MNSPGGRGKKKGSGGASNPVPPRPPPPCLAPAPPAAGPAPPPE). The segment at 1-50 (MNSPGGRGKKKGSGGASNPVPPRPPPPCLAPAPPAAGPAPPPESPHKRNL) is required for nuclear localization. The Cytoplasmic portion of the chain corresponds to 1–56 (MNSPGGRGKKKGSGGASNPVPPRPPPPCLAPAPPAAGPAPPPESPHKRNLYYFSYP). The required for interaction with ATL1 stretch occupies residues 1–80 (MNSPGGRGKK…LGLLFVWLCQ (80 aa)). Residues 1 to 194 (MNSPGGRGKK…LVMAKDRLQL (194 aa)) are required for midbody localization. The tract at residues 1–300 (MNSPGGRGKK…GTPKTNRTNK (300 aa)) is required for interaction with RTN1. The Nuclear localization signal motif lies at 4-11 (PGGRGKKK). The segment covering 19–43 (PVPPRPPPPCLAPAPPAAGPAPPPE) has biased composition (pro residues). Positions 50–87 (LYYFSYPLFVGFALLRLVAFHLGLLFVWLCQRFSRALM) are required for interaction with SSNA1 and microtubules. Residues 57-77 (LFVGFALLRLVAFHLGLLFVW) constitute an intramembrane region (helical). A Nuclear export signal motif is present at residues 59–67 (VGFALLRLV). Residues 78 to 616 (LCQRFSRALM…WNKDFGDTTV (539 aa)) lie on the Cytoplasmic side of the membrane. A sufficient for interaction with CHMP1B region spans residues 112–196 (EAERVRVFHK…MAKDRLQLLE (85 aa)). The segment at 114–200 (ERVRVFHKQA…RLQLLEKMQP (87 aa)) is required for interaction with microtubules. One can recognise an MIT domain in the interval 120-195 (HKQAFEYISI…VMAKDRLQLL (76 aa)). The segment at 224 to 266 (HLQSESGAVPKRKDPLTHTSNSLPRSKTVMKTGSAGLSGHHRA) is disordered. A sufficient for microtubule severing region spans residues 228-616 (ESGAVPKRKD…WNKDFGDTTV (389 aa)). Polar residues predominate over residues 240 to 254 (THTSNSLPRSKTVMK). A phosphoserine mark is found at S245 and S268. The tract at residues 270–328 (SGLSMVSGVKQGSGPAPTTHKGTPKTNRTNKPSTPTTATRKKKDLKNFRNVDSNLANLI) is required for interaction with microtubules and microtubule severing. A disordered region spans residues 278-312 (VKQGSGPAPTTHKGTPKTNRTNKPSTPTTATRKKK). The span at 289-307 (HKGTPKTNRTNKPSTPTTA) shows a compositional bias: polar residues. The residue at position 306 (T306) is a Phosphothreonine. Residues 309–312 (RKKK) carry the Nuclear localization signal motif. A required for interaction with microtubules region spans residues 310–312 (KKK). An ATP-binding site is contributed by 382 to 389 (GPPGNGKT). A Phosphoserine modification is found at S597.

Belongs to the AAA ATPase family. Spastin subfamily. Homohexamer. Mostly monomeric, but assembles into hexameric structure for short periods of time. Oligomerization seems to be a prerequisite for catalytic activity. Binding to ATP in a cleft between two adjacent subunits stabilizes the homohexameric form. Binds to microtubules at least in part via the alpha-tubulin and beta-tubulin tails. The hexamer adopts a ring conformation through which microtubules pass prior to being severed. Does not interact strongly with tubulin heterodimers. Interacts (via MIT domain) with CHMP1B; the interaction is direct. Interacts with SSNA1. Interacts with ATL1. Interacts with RTN1. Interacts with ZFYVE27. Isoform 1 but not isoform 3 interacts with RTN2. Interacts with REEP1. Interacts (via MIT domain) with IST1. As to expression, expressed in brain, heart, kidney, liver, lung, pancreas, placenta and skeletal muscle. The short isoforms may predominate in brain and spinal cord.

The protein resides in the membrane. It localises to the endoplasmic reticulum. The protein localises to the midbody. Its subcellular location is the cytoplasm. It is found in the cytoskeleton. The protein resides in the microtubule organizing center. It localises to the centrosome. The protein localises to the perinuclear region. Its subcellular location is the nucleus. It is found in the spindle. The protein resides in the cell projection. It localises to the axon. The protein localises to the endoplasmic reticulum membrane. Its subcellular location is the nucleus membrane. It is found in the lipid droplet. The protein resides in the endosome. The enzyme catalyses n ATP + n H2O + a microtubule = n ADP + n phosphate + (n+1) alpha/beta tubulin heterodimers.. Allosteric enzyme with a cooperative mechanism; at least two neighbor subunits influence each other strongly in spastin hexamers. Microtubule binding promotes cooperative interactions among spastin subunits. ATP-bound enzyme interacts strongly and cooperatively with microtubules; this interaction stimulates ATP hydrolysis. In terms of biological role, ATP-dependent microtubule severing protein that specifically recognizes and cuts microtubules that are polyglutamylated. Preferentially recognizes and acts on microtubules decorated with short polyglutamate tails: severing activity increases as the number of glutamates per tubulin rises from one to eight, but decreases beyond this glutamylation threshold. Severing activity is not dependent on tubulin acetylation or detyrosination. Microtubule severing promotes reorganization of cellular microtubule arrays and the release of microtubules from the centrosome following nucleation. It is critical for the biogenesis and maintenance of complex microtubule arrays in axons, spindles and cilia. SPAST is involved in abscission step of cytokinesis and nuclear envelope reassembly during anaphase in cooperation with the ESCRT-III complex. Recruited at the midbody, probably by IST1, and participates in membrane fission during abscission together with the ESCRT-III complex. Recruited to the nuclear membrane by IST1 and mediates microtubule severing, promoting nuclear envelope sealing and mitotic spindle disassembly during late anaphase. Required for membrane traffic from the endoplasmic reticulum (ER) to the Golgi and endosome recycling. Recruited by IST1 to endosomes and regulates early endosomal tubulation and recycling by mediating microtubule severing. Probably plays a role in axon growth and the formation of axonal branches. Involved in lipid metabolism by regulating the size and distribution of lipid droplets. This is Spastin from Homo sapiens (Human).